We begin with the raw amino-acid sequence, 197 residues long: Protein-S-isoprenylcysteine O-methyltransferase B (197 aa).

Helical transmembrane passes span 16–36 (MFLA…AIHG), 52–72 (ALAM…FPGL), and 81–101 (FGLT…ITAG). Residues 116 to 119 (HKLV), Y124, and 129 to 132 (HPSY) each bind S-adenosyl-L-methionine. Residues 140 to 160 (VGTQVMLCNPISAIAFAVVVW) traverse the membrane as a helical segment. Residue R166 participates in substrate binding. Residue E170 participates in S-adenosyl-L-methionine binding.

It belongs to the class VI-like SAM-binding methyltransferase superfamily. Isoprenylcysteine carboxyl methyltransferase family. Requires Zn(2+) as cofactor. As to expression, expressed in flowers, stems, leaves, roots and siliques. Detected in apices and vascular tissues of leaves and roots, in the stigma and in the filaments and anthers of stamen. Not found in petioles or hypocotyls.

It is found in the endoplasmic reticulum membrane. It carries out the reaction [protein]-C-terminal S-[(2E,6E)-farnesyl]-L-cysteine + S-adenosyl-L-methionine = [protein]-C-terminal S-[(2E,6E)-farnesyl]-L-cysteine methyl ester + S-adenosyl-L-homocysteine. Its activity is regulated as follows. Inhibited by farnesylthioacetic acid (FTAA) and N-acetyl-S-trans, trans-farnesyl-l-cysteine (AFC). Catalyzes the post-translational methylation of isoprenylated C-terminal cysteine residues, resulting in the modulation of the function of prenylated proteins. Involved in negative regulation of abscisic acid signaling. Carboxyl methylation is a reversible and potentially regulated step in the post-translational modification of prenylated proteins. In Arabidopsis thaliana (Mouse-ear cress), this protein is Protein-S-isoprenylcysteine O-methyltransferase B.